Reading from the N-terminus, the 346-residue chain is Lysyl aminopeptidase (346 aa).

The Zn(2+) site is built by His-63 and Asp-177. Glu-207 serves as the catalytic Proton acceptor. Positions 208, 230, and 314 each coordinate Zn(2+).

Homotetramer. Requires Zn(2+) as cofactor.

The enzyme catalyses Preferentially, release of N-terminal lysine.. In terms of biological role, hydrolyzes di-, tri- and tetrapeptides with a lysine as the N-terminal amino acid and with Gly, Lys, Ala, Phe or Glu in the second position. This is Lysyl aminopeptidase from Pyrococcus furiosus (strain ATCC 43587 / DSM 3638 / JCM 8422 / Vc1).